Consider the following 56-residue polypeptide: Protein hunchback (56 aa).

C2H2-type zinc fingers lie at residues 1–5 (HLRNH), 11–33 (FRCD…LKSH), and 39–56 (YRCA…SLKL).

This sequence belongs to the hunchback C2H2-type zinc-finger protein family.

It is found in the nucleus. Its function is as follows. Gap class segmentation protein that controls development of head structures. In Locusta migratoria (Migratory locust), this protein is Protein hunchback (hb).